Reading from the N-terminus, the 324-residue chain is Serpentine receptor class gamma-10 (324 aa).

8 helical membrane-spanning segments follow: residues 39 to 59 (SSYL…VFHG), 69 to 89 (MLYC…VIFG), 91 to 111 (IFIY…TPSI), 128 to 146 (TFSQ…IFLM), 155 to 175 (ILKP…WKIL), 206 to 226 (LFHF…TILG), 246 to 266 (MIMA…VFFA), and 279 to 299 (IVSF…IVMS).

It belongs to the nematode receptor-like protein srg family.

The protein localises to the membrane. In Caenorhabditis elegans, this protein is Serpentine receptor class gamma-10 (srg-10).